A 301-amino-acid polypeptide reads, in one-letter code: uncharacterized protein (301 aa).

Positions 1 to 26 (MKGFSCSRPGYLTGLLLLAVAPILTA) are cleaved as a signal peptide. Residue C27 is the site of N-palmitoyl cysteine attachment. C27 carries S-diacylglycerol cysteine lipidation. A TNase-like domain is found at 46–243 (KLKPATIEYW…YNAKINIWSH (198 aa)). The interval 64–136 (NYASEERRKE…SKGDSTGDEK (73 aa)) is disordered. Basic and acidic residues-rich tracts occupy residues 67–95 (SEERRKEAEQKSKENAKKEDKKEEKKTED) and 120–136 (TPEKHVSSKGDSTGDEK).

It localises to the cell membrane. This is an uncharacterized protein from Mycoplasma pneumoniae (strain ATCC 29342 / M129 / Subtype 1) (Mycoplasmoides pneumoniae).